Reading from the N-terminus, the 157-residue chain is uncharacterized protein (157 aa).

This is an uncharacterized protein from Saccharomyces cerevisiae (strain ATCC 204508 / S288c) (Baker's yeast).